The primary structure comprises 254 residues: Dihydroorotate dehydrogenase B (NAD(+)), electron transfer subunit (254 aa).

One can recognise an FAD-binding FR-type domain in the interval 1 to 99 (MLQTEMKVIQ…LGPLGKGFDI (99 aa)). FAD contacts are provided by residues 50–53 (RPIS), 67–69 (LYR), and 74–75 (GT). Positions 218, 223, 226, and 241 each coordinate [2Fe-2S] cluster.

This sequence belongs to the PyrK family. As to quaternary structure, heterotetramer of 2 PyrK and 2 PyrD type B subunits. Requires [2Fe-2S] cluster as cofactor. The cofactor is FAD.

It functions in the pathway pyrimidine metabolism; UMP biosynthesis via de novo pathway; orotate from (S)-dihydroorotate (NAD(+) route): step 1/1. Its function is as follows. Responsible for channeling the electrons from the oxidation of dihydroorotate from the FMN redox center in the PyrD type B subunit to the ultimate electron acceptor NAD(+). In Listeria monocytogenes serotype 4a (strain HCC23), this protein is Dihydroorotate dehydrogenase B (NAD(+)), electron transfer subunit.